The following is a 185-amino-acid chain: Ribosome-recycling factor (185 aa).

It belongs to the RRF family.

It localises to the cytoplasm. In terms of biological role, responsible for the release of ribosomes from messenger RNA at the termination of protein biosynthesis. May increase the efficiency of translation by recycling ribosomes from one round of translation to another. In Chloroflexus aggregans (strain MD-66 / DSM 9485), this protein is Ribosome-recycling factor.